Here is a 339-residue protein sequence, read N- to C-terminus: Protein FAM76B (339 aa).

The residue at position 2 (A2) is an N-acetylalanine. 2 positions are modified to phosphoserine: S22 and S148. The tract at residues 144–243 (EQRKSLGSSH…INQSADSGGT (100 aa)) is disordered. The span at 148–160 (SLGSSHSNSSSSS) shows a compositional bias: low complexity. Residues 167-189 (HHSKHHHHHHHHHHRHSSGHHKV) show a composition bias toward basic residues. S193 carries the post-translational modification Phosphoserine. T215 bears the Phosphothreonine mark. Over residues 215–224 (TPKKKPKLES) the composition is skewed to basic and acidic residues. A compositionally biased stretch (polar residues) spans 228-243 (NGDSSSINQSADSGGT). A coiled-coil region spans residues 248 to 328 (LISQLKEEVM…QVAALSKGKK (81 aa)).

Belongs to the FAM76 family. Interacts with HNRNPA2B1 (via C-terminus); the interaction results in retention of HNRNPA2B1 in the nucleus and inhibition of the NF-kappa-B-mediated inflammatory pathway.

It is found in the nucleus speckle. Functionally, negatively regulates the NF-kappa-B-mediated inflammatory pathway by preventing the translocation of HNRNPA2B1 from the nucleus to the cytoplasm. Inhibits the PI3K/Akt/NF-kappa-B pathway-mediated polarization of M1 macrophages by binding to and stabilizing PIK3CD mRNA, resulting in increased levels of PIK3CD protein and increased levels of phosphorylated downstream target AKT which leads to decreased NF-kappa-B signaling. The sequence is that of Protein FAM76B (Fam76b) from Mus musculus (Mouse).